Reading from the N-terminus, the 252-residue chain is Cysteine-rich repeat secretory protein 38 (252 aa).

A signal peptide spans 1–27; sequence MSSLKRIVWFPILAIAIQILSIHTVLS. Gnk2-homologous domains lie at 34 to 136 and 142 to 248; these read FLFH…STNF and FENR…IYPF.

This sequence belongs to the cysteine-rich repeat secretory protein family.

The protein localises to the secreted. The chain is Cysteine-rich repeat secretory protein 38 (CRRSP38) from Arabidopsis thaliana (Mouse-ear cress).